Reading from the N-terminus, the 308-residue chain is Ribosomal RNA large subunit methyltransferase F (308 aa).

It belongs to the methyltransferase superfamily. METTL16/RlmF family.

It is found in the cytoplasm. The catalysed reaction is adenosine(1618) in 23S rRNA + S-adenosyl-L-methionine = N(6)-methyladenosine(1618) in 23S rRNA + S-adenosyl-L-homocysteine + H(+). In terms of biological role, specifically methylates the adenine in position 1618 of 23S rRNA. The sequence is that of Ribosomal RNA large subunit methyltransferase F from Salmonella arizonae (strain ATCC BAA-731 / CDC346-86 / RSK2980).